The chain runs to 584 residues: High-affinity choline transporter 1 (584 aa).

Topologically, residues 1 to 6 (MTVHID) are extracellular. Residues 7 to 27 (GIVAIVLFYLLILFVGLWAAW) form a helical membrane-spanning segment. The Cytoplasmic segment spans residues 28 to 50 (KSKNTSMEGAMDRSEAIMIGGRD). The chain crosses the membrane as a helical span at residues 51-71 (IGLLVGGFTMTATWVGGGYIN). The Extracellular segment spans residues 72-83 (GTAEAVYVPGYG). The helical transmembrane segment at 84–104 (LAWAQAPFGYALSLVIGGLFF) threads the bilayer. Over 105-127 (AKPMRSRGYVTMLDPFQQMYGKR) the chain is Cytoplasmic. Residues 128 to 148 (MGGLLFIPALLGEIFWSAAIL) traverse the membrane as a helical segment. At 149-166 (SALGATLSVIVDININVS) the chain is on the extracellular side. Residues 167–187 (VVVSAVIAVLYTLVGGLYSVA) traverse the membrane as a helical segment. Topologically, residues 188–193 (YTDVVQ) are cytoplasmic. Residues 194-214 (LFCIFLGLWISIPFALLNPAV) traverse the membrane as a helical segment. Over 215–239 (TDIIVTANQEVYQEPWVGNIQSKDS) the chain is Extracellular. The helical transmembrane segment at 240 to 260 (LIWIDNFLLLMLGGIPWQVYF) threads the bilayer. At 261–276 (QRVLSASSATYAQVLS) the chain is on the cytoplasmic side. The helical transmembrane segment at 277 to 297 (FLAAFGCVLMAIPSVLIGAIG) threads the bilayer. Over 298–319 (TSTDWNQTSYGLPGPIGKNETD) the chain is Extracellular. N-linked (GlcNAc...) asparagine glycosylation is present at N303. Residues 320-340 (MILPIVLQHLCPPYISFFGLG) form a helical membrane-spanning segment. Over 341–378 (AVSAAVMSSADSSILSASSMFARNIYHLAFRQEASDKE) the chain is Cytoplasmic. The chain crosses the membrane as a helical span at residues 379 to 399 (IVWVMRITIFLFGGAATSMAL). The Extracellular segment spans residues 400–408 (LAQSIYGLW). A helical transmembrane segment spans residues 409 to 429 (YLSSDLVYVIIFPQLISVLFV). The Cytoplasmic portion of the chain corresponds to 430-437 (KGTNTYGS). The helical transmembrane segment at 438–458 (IAGYIIGFLLRISGGEPYLHM) threads the bilayer. The Extracellular segment spans residues 459 to 487 (QPFIYYPGCYLDHSFGDDPVYVQRFPFKT). The helical transmembrane segment at 488–508 (MAMLFSFLGNTGVSYLVKYLF) threads the bilayer. Topologically, residues 509–584 (VSGILPPKLD…NPELSKSGND (76 aa)) are cytoplasmic.

It belongs to the sodium:solute symporter (SSF) (TC 2.A.21) family. Phosphorylated. In terms of tissue distribution, specific for cholinergic neurons.

Its subcellular location is the membrane. Imports choline from the extracellular space to the neuron with high affinity. Rate-limiting step in acetylcholine synthesis. Sodium ion and chloride ion dependent. The chain is High-affinity choline transporter 1 (CHT1) from Torpedo marmorata (Marbled electric ray).